The chain runs to 414 residues: N-carbamoyl-L-amino-acid amidohydrolase (414 aa).

Positions 83, 94, 129, and 195 each coordinate a divalent metal cation. Positions 198, 231, 281, 294, and 363 each coordinate an N-carbamoyl-L-alpha-amino acid. The interval 214–333 (GIAGPSWFKV…QIEKNMAAVP (120 aa)) is involved in dimerization. Residue His388 coordinates a divalent metal cation.

Belongs to the peptidase M20 family. Homodimer. Mn(2+) serves as cofactor. The cofactor is Ni(2+). Co(2+) is required as a cofactor. Requires Fe(2+) as cofactor.

It catalyses the reaction an N-carbamoyl-L-alpha-amino acid + H2O + 2 H(+) = an L-alpha-amino acid + NH4(+) + CO2. It carries out the reaction N-carbamoyl-L-methionine + H2O + 2 H(+) = L-methionine + NH4(+) + CO2. Its function is as follows. Catalyzes the hydrolysis of N-carbamoyl-L-alpha-amino acids to free L-alpha-amino acids. Is strictly L-specific since it is inactive toward N-carbamoyl-D-alpha-amino acids. The polypeptide is N-carbamoyl-L-amino-acid amidohydrolase (Pseudomonas sp. (strain NS671)).